A 267-amino-acid polypeptide reads, in one-letter code: RWD domain-containing protein 3 (267 aa).

Residues 7 to 114 (QELSALAAIF…LWTQQNLRHI (108 aa)) enclose the RWD domain. Interaction with UBE2I/UBC9 stretches follow at residues 13-15 (AAI) and 100-102 (VHE).

In terms of assembly, interacts with UBE2I/UBC9, NFKBIA, HIF1A and NCOA2.

It localises to the nucleus. Its subcellular location is the cytoplasm. Functionally, enhancer of SUMO conjugation. Via its interaction with UBE2I/UBC9, increases SUMO conjugation to proteins by promoting the binding of E1 and E2 enzymes, thioester linkage between SUMO and UBE2I/UBC9 and transfer of SUMO to specific target proteins which include HIF1A, PIAS, NFKBIA, NR3C1 and TOP1. Positively regulates the NF-kappa-B signaling pathway by enhancing the sumoylation of NF-kappa-B inhibitor alpha (NFKBIA), promoting its stabilization which consequently leads to an increased inhibition of NF-kappa-B transcriptional activity. Negatively regulates the hypoxia-inducible factor-1 alpha (HIF1A) signaling pathway by increasing the sumoylation of HIF1A, promoting its stabilization, transcriptional activity and the expression of its target gene VEGFA during hypoxia. Has no effect on ubiquitination. The sequence is that of RWD domain-containing protein 3 (Rwdd3) from Rattus norvegicus (Rat).